The sequence spans 145 residues: Large ribosomal subunit protein uL13 (145 aa).

The protein belongs to the universal ribosomal protein uL13 family. Part of the 50S ribosomal subunit.

Functionally, this protein is one of the early assembly proteins of the 50S ribosomal subunit, although it is not seen to bind rRNA by itself. It is important during the early stages of 50S assembly. The polypeptide is Large ribosomal subunit protein uL13 (Bacillus thuringiensis (strain Al Hakam)).